A 190-amino-acid chain; its full sequence is MEALHKKIREEGIVLSDQVLKVDAFLNHQIDPALMKLIGDEFAALFKDSGITKIVTIEASGIAPAIMTGLNLGVPVIFARKQQSLTLTENLLSATVYSFTKKTESTVAISPRHLTSSDRVLVIDDFLANGKASQALISIIKQAGATVAGLGIVIEKSFQGGRAELDAQGYRVESLARVKSLAGGVVTFIE.

L20 and N27 together coordinate xanthine. Residue 128 to 132 (ANGKA) participates in 5-phospho-alpha-D-ribose 1-diphosphate binding. Xanthine is bound at residue K156.

It belongs to the purine/pyrimidine phosphoribosyltransferase family. Xpt subfamily. As to quaternary structure, homodimer.

It is found in the cytoplasm. The catalysed reaction is XMP + diphosphate = xanthine + 5-phospho-alpha-D-ribose 1-diphosphate. It functions in the pathway purine metabolism; XMP biosynthesis via salvage pathway; XMP from xanthine: step 1/1. In terms of biological role, converts the preformed base xanthine, a product of nucleic acid breakdown, to xanthosine 5'-monophosphate (XMP), so it can be reused for RNA or DNA synthesis. The polypeptide is Xanthine phosphoribosyltransferase (Pseudomonas fluorescens (strain SBW25)).